We begin with the raw amino-acid sequence, 309 residues long: Olfactory receptor-like protein OLF4 (309 aa).

Topologically, residues 1–25 are extracellular; the sequence is MELENDTRIPEFLLLGFSEEPKLQP. Asn-5 carries N-linked (GlcNAc...) asparagine glycosylation. The helical transmembrane segment at 26–49 threads the bilayer; sequence FLFGLFLSMYLVTILGNLLLILAV. Residues 50-57 lie on the Cytoplasmic side of the membrane; sequence SSDSHLHT. Residues 58-79 traverse the membrane as a helical segment; sequence PMYFFLANLSFVDICFTCTTIP. Topologically, residues 80-100 are extracellular; the sequence is KMLVNIQTQRKVITYESCIIQ. A helical membrane pass occupies residues 101–120; the sequence is MYFFELFAGIDNFLLTVMAY. At 121–139 the chain is on the cytoplasmic side; the sequence is DRYMAICYPLHYMVIMNPQ. The helical transmembrane segment at 140 to 158 threads the bilayer; the sequence is LCSLLLLVSWIMSALHSLL. Over 159–196 the chain is Extracellular; it reads QTLMVLRLSFCTHFQIPHFFCELNQMIQLACSDTFLNN. A helical membrane pass occupies residues 197–219; it reads MMLYFAAILLGVAPLVGVLYSYF. Topologically, residues 220-236 are cytoplasmic; that stretch reads KIVSSIRGISSAHSKYK. The helical transmembrane segment at 237-260 threads the bilayer; sequence AFSTCASHLSVVSLFYCTSLGVYL. Residues 261–272 lie on the Extracellular side of the membrane; the sequence is SSAAPQSTHTSS. A helical transmembrane segment spans residues 273–292; it reads VASVMYTVVTPMLNPFIYSL. At 293–309 the chain is on the cytoplasmic side; that stretch reads RNKDIKGALNVFFRGKP.

Belongs to the G-protein coupled receptor 1 family.

The protein localises to the cell membrane. In terms of biological role, putative odorant or sperm cell receptor. The sequence is that of Olfactory receptor-like protein OLF4 from Canis lupus familiaris (Dog).